We begin with the raw amino-acid sequence, 350 residues long: 3-methylornithine synthase (350 aa).

In terms of domain architecture, Radical SAM core spans 57 to 279 (NRVFLNCFIY…PKRLIPASLD (223 aa)). [4Fe-4S] cluster is bound by residues cysteine 71 and cysteine 75. Residue phenylalanine 77 participates in S-adenosyl-L-methionine binding. Cysteine 78 provides a ligand contact to [4Fe-4S] cluster. Residues aspartate 112, serine 146, and tyrosine 169 each coordinate (3R)-3-methyl-D-ornithine. Residues glutamate 171, arginine 182, and arginine 190 each coordinate S-adenosyl-L-methionine. Arginine 235 lines the (3R)-3-methyl-D-ornithine pocket. Residues leucine 240 and glutamine 242 each coordinate S-adenosyl-L-methionine. (3R)-3-methyl-D-ornithine contacts are provided by serine 277, threonine 298, and serine 299.

Belongs to the radical SAM superfamily. PylB family. Requires [4Fe-4S] cluster as cofactor. The cofactor is S-adenosyl-L-methionine.

It catalyses the reaction L-lysine = (3R)-3-methyl-D-ornithine. The protein operates within amino-acid biosynthesis; L-pyrrolysine biosynthesis. Catalyzes the isomerization of L-lysine to (3R)-3-methyl-D-ornithine via a radical-based mechanism, a step in the biosynthesis pathway of pyrrolysine. Also catalyzes the reverse reaction in vitro, converting (3R)-3-methyl-D-ornithine into L-lysine. The protein is 3-methylornithine synthase of Methanosarcina barkeri (strain Fusaro / DSM 804).